The chain runs to 1017 residues: MRVFLLCAYILLLMISQLRAVSFPEDDEPLNTVDYHYSRQYPVFRGRPSGNESQHRLDFQLMLKIRDTLYIAGRDQVYTVNLNEMPKTEVIPSKKLTWRSRQQDRENCAMKGKHKDECHNFIKVFVPRNDEMVFVCGTNAFNPMCRYYRLSTLEYDGEEISGLARCPFDARQTNVALFADGKLYSATVADFLASDAVIYRSMGDGSALRTIKYDSKWIKEPHFLHAIEYGNYVYFFFREIAVEHNNLGKAVYSRVARICKNDMGGSQRVLEKHWTSFLKARLNCSVPGDSFFYFDVLQSITDIIQINGIPTVVGVFTTQLNSIPGSAVCAFSMDDIEKVFKGRFKEQKTPDSVWTAVPEDKVPKPRPGCCAKHGLAEAYKTSIDFPDETLSFIKSHPLMDSAVPPIADEPWFTKTRVRYRLTAIAVDHSAGPYQNYTVIFVGSEAGVVLKVLAKTSPFSLNDSVLLEEIEAYNHAKCNAENEEDKKVISLQLDKNHHALYVAFSSCVIRIPLSRCERYGSCKKSCIASRDPYCGWLSQGSCGRVTPGMLAEGYEQDAEFGNTAHLGDCHEILPTSTTPDYKIFGGPTSGVRWEVQSGESNQMVHMNVLITCVFAAFVLGAFIAGVAVYCYRDMFVRKNRKIHKDAESAQSCTDSSGSFAKLNGLFDSPVKEYQQNIDSPKLYSNLLTSRKELPPNGDTKSMVMDHRGQPPELAALPTPESTPVLHQKTLQAMKSHSEKAHGHGASRKETPQFFPSSPPPHSPLSHGHIPSAIVLPNATHDYNTSFSNSNAHKAEKKLQNIDHPLTKSSSKRDHRRSVDSRNTLNDLLKHLNDPNSNPKAIMGDIQMAHQNLMLDPMGSMSEVPPKVPNREASLYSPPSTLPRNSPTKRVDVPTTPGVPMTSLGRQRGYHKNSSQRHSISAMPKNLNSPNGVLLSRQPSMNHGGYMPTPTGAKVDYIQGTPVSVHLQPSLSRQSSYTSNGTLPRTGLKRTPSLKPDVPPKPSFVPQTPSVRPLNKYTY.

A signal peptide spans 1 to 20 (MRVFLLCAYILLLMISQLRA). Topologically, residues 21-606 (VSFPEDDEPL…GESNQMVHMN (586 aa)) are extracellular. Residues 27-512 (DEPLNTVDYH…FSSCVIRIPL (486 aa)) form the Sema domain. N-linked (GlcNAc...) asparagine glycosylation is present at asparagine 51. 4 disulfide bridges follow: cysteine 108/cysteine 118, cysteine 136/cysteine 145, cysteine 259/cysteine 370, and cysteine 284/cysteine 329. Asparagine 283 carries an N-linked (GlcNAc...) asparagine glycan. 2 N-linked (GlcNAc...) asparagine glycosylation sites follow: asparagine 435 and asparagine 461. Disulfide bonds link cysteine 477-cysteine 506, cysteine 515-cysteine 533, cysteine 521-cysteine 568, and cysteine 525-cysteine 541. Residues 514 to 569 (RCERYGSCKKSCIASRDPYCGWLSQGSCGRVTPGMLAEGYEQDAEFGNTAHLGDCH) form the PSI domain. Residues 607-627 (VLITCVFAAFVLGAFIAGVAV) form a helical membrane-spanning segment. The Cytoplasmic portion of the chain corresponds to 628–1017 (YCYRDMFVRK…SVRPLNKYTY (390 aa)). 3 positions are modified to phosphoserine: serine 667, serine 678, and serine 688. 4 disordered regions span residues 688–719 (SRKE…PTPE), 731–769 (AMKS…GHIP), 783–818 (TSFS…RSVD), and 873–912 (LYSP…HKNS). Threonine 717 is modified (phosphothreonine). Over residues 734 to 749 (SHSEKAHGHGASRKET) the composition is skewed to basic and acidic residues. 3 positions are modified to phosphoserine: serine 875, serine 901, and serine 927. Polar residues predominate over residues 875–886 (SPPSTLPRNSPT). The span at 965-981 (LQPSLSRQSSYTSNGTL) shows a compositional bias: polar residues. The tract at residues 965-1017 (LQPSLSRQSSYTSNGTLPRTGLKRTPSLKPDVPPKPSFVPQTPSVRPLNKYTY) is disordered.

Belongs to the semaphorin family.

Its subcellular location is the cell membrane. In terms of biological role, shows growth cone collapsing activity on dorsal root ganglion (DRG) neurons in vitro. May be a stop signal for the DRG neurons in their target areas, and possibly also for other neurons. May also be involved in the maintenance and remodeling of neuronal connections. Ligand of TREM2 with PLXNA1 as coreceptor in dendritic cells, plays a role in the generation of immune responses and skeletal homeostasis. The protein is Semaphorin-6D (SEMA6D) of Pongo abelii (Sumatran orangutan).